A 132-amino-acid chain; its full sequence is Interleukin-13 (132 aa).

The first 18 residues, 1–18 (MALLLTTVIALTCLGGFA), serve as a signal peptide directing secretion. N-linked (GlcNAc...) asparagine glycans are attached at residues N38, N49, N57, and N72. 2 cysteine pairs are disulfide-bonded: C48-C76 and C64-C90.

Belongs to the IL-4/IL-13 family. In terms of assembly, interacts with IL13RA2.

It is found in the secreted. Its function is as follows. Cytokine that plays important roles in allergic inflammation and immune response to parasite infection. Synergizes with IL2 in regulating interferon-gamma synthesis. Stimulates B-cell proliferation, and activation of eosinophils, basophils, and mast cells. Plays an important role in controlling IL33 activity by modulating the production of transmembrane and soluble forms of interleukin-1 receptor-like 1/IL1RL1. Displays the capacity to antagonize Th1-driven proinflammatory immune response and downregulates synthesis of many proinflammatory cytokines including IL1, IL6, IL10, IL12 and TNF-alpha through a mechanism that partially involves suppression of NF-kappa-B. Also functions on nonhematopoietic cells, including endothelial cells where it induces vascular cell adhesion protein 1/VCAM1, which is important in the recruitment of eosinophils. Exerts its biological effects through its receptors which comprises the IL4R chain and the IL13RA1 chain, to activate JAK1 and TYK2, leading to the activation of STAT6. Aside from IL13RA1, another receptor IL13RA2 acts as a high affinity decoy for IL13 and mediates internalization and depletion of extracellular IL13. The protein is Interleukin-13 (IL13) of Macaca mulatta (Rhesus macaque).